Consider the following 443-residue polypeptide: Structure-specific endonuclease subunit SLX1 homolog (443 aa).

The disordered stretch occupies residues 1–27; that stretch reads METFILSSDSDDDSGPPPSKRRTIEGI. The GIY-YIG domain occupies 171 to 258; that stretch reads EFYGVYCLIS…PLVSKSLKEK (88 aa). Residues 340 to 395 form an SLX1-type zinc finger; it reads CRICGKDIEKLWSLVRCISATCPSHFHSKCLSENGLKLKNEHVDHVYPLKANCPTC.

This sequence belongs to the SLX1 family. As to quaternary structure, forms a heterodimer with him-18/slx-4. It depends on a divalent metal cation as a cofactor.

It is found in the nucleus. Its function is as follows. Catalytic subunit of a heterodimeric structure-specific endonuclease that resolves DNA secondary structures generated during DNA repair and recombination. Has endonuclease activity towards branched DNA substrates, introducing single-strand cuts in duplex DNA close to junctions with ss-DNA (Potential). Has a preference for replication forks over 5' flap structures or Holliday junctions and shows much lower activity toward 3' flap structures. Required for proper crossover distribution through inhibition of crossover formation at the central region of chromosomes. This is Structure-specific endonuclease subunit SLX1 homolog from Caenorhabditis elegans.